Consider the following 729-residue polypeptide: Catalase-peroxidase (729 aa).

Positions 1 to 24 (MDAKTNDGKAGQCPFTSGRGHKNR) are disordered. The tryptophyl-tyrosyl-methioninium (Trp-Tyr) (with M-243) cross-link spans 95–217 (WHSAGTYRIT…LAAVQMGLIY (123 aa)). Residue histidine 96 is the Proton acceptor of the active site. Residues 217–243 (YVNPEGPNGQPDPLAAAKDIRETFLRM) constitute a cross-link (tryptophyl-tyrosyl-methioninium (Tyr-Met) (with W-95)). Heme b is bound at residue histidine 258.

This sequence belongs to the peroxidase family. Peroxidase/catalase subfamily. As to quaternary structure, homodimer or homotetramer. It depends on heme b as a cofactor. In terms of processing, formation of the three residue Trp-Tyr-Met cross-link is important for the catalase, but not the peroxidase activity of the enzyme.

The enzyme catalyses H2O2 + AH2 = A + 2 H2O. It carries out the reaction 2 H2O2 = O2 + 2 H2O. In terms of biological role, bifunctional enzyme with both catalase and broad-spectrum peroxidase activity. The polypeptide is Catalase-peroxidase (Nitrobacter winogradskyi (strain ATCC 25391 / DSM 10237 / CIP 104748 / NCIMB 11846 / Nb-255)).